Consider the following 290-residue polypeptide: Xyloglucan endotransglucosylase/hydrolase protein 3 (290 aa).

Positions 1-21 are cleaved as a signal peptide; the sequence is MDYMRIFSVFVVTLWIIRVDA. Residues 22 to 220 form the GH16 domain; sequence RVFGGRGIEK…WSYSPFIAHF (199 aa). The Nucleophile role is filled by Glu-109. Residue Glu-113 is the Proton donor of the active site. Residues Glu-113, 126–128, 136–138, 199–200, and Gly-204 contribute to the xyloglucan site; these read QTN, NRE, and DW. Asn-210 carries an N-linked (GlcNAc...) asparagine glycan. Cystine bridges form between Cys-228-Cys-240 and Cys-276-Cys-289.

The protein belongs to the glycosyl hydrolase 16 family. XTH group 1 subfamily. Contains at least one intrachain disulfide bond essential for its enzymatic activity. Predominantly expressed in flower buds.

The protein resides in the secreted. It is found in the cell wall. It localises to the extracellular space. The protein localises to the apoplast. The enzyme catalyses breaks a beta-(1-&gt;4) bond in the backbone of a xyloglucan and transfers the xyloglucanyl segment on to O-4 of the non-reducing terminal glucose residue of an acceptor, which can be a xyloglucan or an oligosaccharide of xyloglucan.. Catalyzes xyloglucan endohydrolysis (XEH) and/or endotransglycosylation (XET). Cleaves and religates xyloglucan polymers, an essential constituent of the primary cell wall, and thereby participates in cell wall construction of growing tissues. The chain is Xyloglucan endotransglucosylase/hydrolase protein 3 (XTH3) from Arabidopsis thaliana (Mouse-ear cress).